Consider the following 487-residue polypeptide: Pentatricopeptide repeat-containing protein At5g61370, mitochondrial (487 aa).

The transit peptide at 1 to 90 (MMSTTVRLNR…TSPRRLLRFF (90 aa)) directs the protein to the mitochondrion. PPR repeat units follow at residues 137–171 (DKQTFSIVAETLVKVGKEEDAIGIFKILDKFSCPQ), 172–202 (DGFTVTAIISALCSRGHVKRALGVMHHHKDV), 207–241 (ELSVYRSLLFGWSVQRNVKEARRVIQDMKSAGITP), 242–283 (DLFC…KIQP), 284–318 (TSMSYNILLSCLGRTRRVRESCQILEQMKRSGCDP), 319–353 (DTGSYYFVVRVLYLTGRFGKGNQIVDEMIERGFRP), 354–388 (ERKFYYDLIGVLCGVERVNFALQLFEKMKRSSVGG), and 389–423 (YGQVYDLLIPKLCKGGNFEKGRELWEEALSIDVTL). The segment at 466-487 (TKPKLKLKPKRRSKTKKKNLQH) is disordered.

This sequence belongs to the PPR family. P subfamily.

It is found in the mitochondrion. This is Pentatricopeptide repeat-containing protein At5g61370, mitochondrial from Arabidopsis thaliana (Mouse-ear cress).